The sequence spans 255 residues: Phosphate import ATP-binding protein PstB (255 aa).

Residues 10-250 (INIKDLNLWY…PQMKSTEDYI (241 aa)) form the ABC transporter domain. Residue 42–49 (GPSGCGKS) participates in ATP binding.

The protein belongs to the ABC transporter superfamily. Phosphate importer (TC 3.A.1.7) family. In terms of assembly, the complex is composed of two ATP-binding proteins (PstB), two transmembrane proteins (PstC and PstA) and a solute-binding protein (PstS).

The protein resides in the cell membrane. The catalysed reaction is phosphate(out) + ATP + H2O = ADP + 2 phosphate(in) + H(+). Part of the ABC transporter complex PstSACB involved in phosphate import. Responsible for energy coupling to the transport system. The protein is Phosphate import ATP-binding protein PstB of Methanococcoides burtonii (strain DSM 6242 / NBRC 107633 / OCM 468 / ACE-M).